A 309-amino-acid chain; its full sequence is Tumor necrosis factor ligand superfamily member 13B (309 aa).

The Cytoplasmic segment spans residues 1–47; it reads MDESAKTLPPPCLCFCSEKGEDMKVGYDPITPQKEEGAWFGICRDGR. A helical; Signal-anchor for type II membrane protein membrane pass occupies residues 48-68; the sequence is LLAATLLLALLSSSFTAMSLY. Over 69–309 the chain is Extracellular; that stretch reads QLAALQADLM…DTFFGALKLL (241 aa). The disordered stretch occupies residues 110–140; sequence PAAPRPHNSSRGHRNRRAFQGPEETEQDVDL. Asparagine 117 and asparagine 266 each carry an N-linked (GlcNAc...) asparagine glycan. Residues 117–126 show a composition bias toward basic residues; it reads NSSRGHRNRR. The region spanning 169 to 308 is the THD domain; it reads DCLQLIADSD…DDTFFGALKL (140 aa). Cysteines 256 and 269 form a disulfide.

This sequence belongs to the tumor necrosis factor family. In terms of assembly, homotrimer. Isoform 2 heteromultimerizes with isoform 1, probably limiting the amount of functional isoform 1 on the cell surface. In terms of processing, the soluble form derives from the membrane form by proteolytic processing. Isoform 2 is not efficiently shed from the membrane unlike isoform 1. In terms of tissue distribution, isoform 2 is expressed in many myeloid cell lines.

The protein localises to the cell membrane. It localises to the secreted. Its function is as follows. Cytokine that binds to TNFRSF13B/TACI and TNFRSF17/BCMA. TNFSF13/APRIL binds to the same 2 receptors. Together, they form a 2 ligands -2 receptors pathway involved in the stimulation of B- and T-cell function and the regulation of humoral immunity. A third B-cell specific BAFF-receptor (BAFFR/BR3) promotes the survival of mature B-cells and the B-cell response. Isoform 2 seems to inhibit isoform 1 secretion and bioactivity. The protein is Tumor necrosis factor ligand superfamily member 13B (Tnfsf13b) of Mus musculus (Mouse).